The chain runs to 132 residues: Large ribosomal subunit protein uL24 (132 aa).

This sequence belongs to the universal ribosomal protein uL24 family. As to quaternary structure, part of the 50S ribosomal subunit.

Functionally, one of two assembly initiator proteins, it binds directly to the 5'-end of the 23S rRNA, where it nucleates assembly of the 50S subunit. In terms of biological role, one of the proteins that surrounds the polypeptide exit tunnel on the outside of the subunit. The sequence is that of Large ribosomal subunit protein uL24 from Synechococcus sp. (strain JA-3-3Ab) (Cyanobacteria bacterium Yellowstone A-Prime).